We begin with the raw amino-acid sequence, 410 residues long: Histidine--tRNA ligase (410 aa).

The protein belongs to the class-II aminoacyl-tRNA synthetase family. In terms of assembly, homodimer.

Its subcellular location is the cytoplasm. It carries out the reaction tRNA(His) + L-histidine + ATP = L-histidyl-tRNA(His) + AMP + diphosphate + H(+). The chain is Histidine--tRNA ligase from Elusimicrobium minutum (strain Pei191).